The sequence spans 321 residues: Ribosomal RNA small subunit methyltransferase H (321 aa).

Residues 40–42 (GGH), D60, F84, D106, and Q113 each bind S-adenosyl-L-methionine.

It belongs to the methyltransferase superfamily. RsmH family.

It is found in the cytoplasm. It carries out the reaction cytidine(1402) in 16S rRNA + S-adenosyl-L-methionine = N(4)-methylcytidine(1402) in 16S rRNA + S-adenosyl-L-homocysteine + H(+). In terms of biological role, specifically methylates the N4 position of cytidine in position 1402 (C1402) of 16S rRNA. The protein is Ribosomal RNA small subunit methyltransferase H of Histophilus somni (strain 2336) (Haemophilus somnus).